Here is a 1199-residue protein sequence, read N- to C-terminus: DNA-directed RNA polymerase subunit beta (1199 aa).

The interval 1175–1199 (EEKKAHEAAAQATDGKSANSTDDKK) is disordered. Residues 1188–1199 (DGKSANSTDDKK) are compositionally biased toward polar residues.

This sequence belongs to the RNA polymerase beta chain family. In terms of assembly, the RNAP catalytic core consists of 2 alpha, 1 beta, 1 beta' and 1 omega subunit. When a sigma factor is associated with the core the holoenzyme is formed, which can initiate transcription.

The enzyme catalyses RNA(n) + a ribonucleoside 5'-triphosphate = RNA(n+1) + diphosphate. In terms of biological role, DNA-dependent RNA polymerase catalyzes the transcription of DNA into RNA using the four ribonucleoside triphosphates as substrates. This is DNA-directed RNA polymerase subunit beta from Lacticaseibacillus casei (strain BL23) (Lactobacillus casei).